The primary structure comprises 172 residues: Glutamyl-tRNA(Gln) amidotransferase subunit C-4, mitochondrial (172 aa).

The transit peptide at 1-23 (MIRIPFHLRQTPGRTLHSLVRSF) directs the protein to the mitochondrion. The tract at residues 51-73 (PSKVPQRPHKSTIDGQSTPTRIP) is disordered.

It belongs to the GatC family. Subunit of the heterotrimeric GatCAB amidotransferase (AdT) complex, composed of A, B and C subunits.

It is found in the mitochondrion. The enzyme catalyses L-glutamyl-tRNA(Gln) + L-glutamine + ATP + H2O = L-glutaminyl-tRNA(Gln) + L-glutamate + ADP + phosphate + H(+). In terms of biological role, allows the formation of correctly charged Gln-tRNA(Gln) through the transamidation of misacylated Glu-tRNA(Gln) in the mitochondria. The reaction takes place in the presence of glutamine and ATP through an activated gamma-phospho-Glu-tRNA(Gln). This chain is Glutamyl-tRNA(Gln) amidotransferase subunit C-4, mitochondrial, found in Culex quinquefasciatus (Southern house mosquito).